The primary structure comprises 338 residues: MSITVNQIVLHQLVKNVDGDSIKMESVLRDELLSITPEVEQMMLQLHQGYQNKAKAFGVFQEKSIFAQHLNRLLEQEIEFLGFSQYSTKLLADELGKYNFVESGTLILCQYNFLATDYLFIALLDSRHSMLVDEHLDIRRTEYLDITQFDIAARINLTDLQVNANSNRYLTFIKGRVGRKISDFFMDFLGAEEGLNPQVQNQCLLQAVSDYCDQGELNKEQTQAVKKQVFEYCKGQLSNGNNIKLRELSDSLPTLNEQPFVVFTEEQNYGLEESIPPIRSTLKSLTKFSGSGKGVTLSFDAELLNTRIQWDPMTDTLTIKGLPPNLKDQLQKALKSEN.

This sequence belongs to the YejK family.

It is found in the cytoplasm. The protein localises to the nucleoid. In Haemophilus influenzae (strain PittGG), this protein is Nucleoid-associated protein CGSHiGG_07705.